Reading from the N-terminus, the 231-residue chain is Cytidylate kinase (231 aa).

18–26 contacts ATP; that stretch reads GPSGTGKSS.

It belongs to the cytidylate kinase family. Type 1 subfamily.

Its subcellular location is the cytoplasm. It catalyses the reaction CMP + ATP = CDP + ADP. The enzyme catalyses dCMP + ATP = dCDP + ADP. This is Cytidylate kinase from Streptomyces coelicolor (strain ATCC BAA-471 / A3(2) / M145).